A 249-amino-acid chain; its full sequence is NADH dehydrogenase [ubiquinone] flavoprotein 2, mitochondrial (249 aa).

The N-terminal 32 residues, 1-32 (MFLSAALRARAAGLAAHWGKHIRNLHKTAVQN), are a transit peptide targeting the mitochondrion. Residue K61 is modified to N6-acetyllysine. [2Fe-2S] cluster-binding residues include C135, C140, C176, and C180. At Y193 the chain carries Phosphotyrosine; by SRC. The tract at residues 213–249 (IPKPGPRSGRFSCEPAGGLTSLTEPPKGPGFGVQAGL) is disordered.

The protein belongs to the complex I 24 kDa subunit family. In terms of assembly, core subunit of respiratory chain NADH dehydrogenase (Complex I) which is composed of 45 different subunits. This is a component of the flavoprotein-sulfur (FP) fragment of the enzyme. [2Fe-2S] cluster is required as a cofactor.

The protein localises to the mitochondrion inner membrane. It carries out the reaction a ubiquinone + NADH + 5 H(+)(in) = a ubiquinol + NAD(+) + 4 H(+)(out). In terms of biological role, core subunit of the mitochondrial membrane respiratory chain NADH dehydrogenase (Complex I) which catalyzes electron transfer from NADH through the respiratory chain, using ubiquinone as an electron acceptor. Parts of the peripheral arm of the enzyme, where the electrons from NADH are accepted by flavin mononucleotide (FMN) and then passed along a chain of iron-sulfur clusters by electron tunnelling to the final acceptor ubiquinone. Contains one iron-sulfur cluster. The chain is NADH dehydrogenase [ubiquinone] flavoprotein 2, mitochondrial (NDUFV2) from Bos taurus (Bovine).